The sequence spans 353 residues: Nucleotide-binding protein sce5766 (353 aa).

27–34 (GLSGAGKS) serves as a coordination point for ATP. Residue 76–79 (DVRV) coordinates GTP. The disordered stretch occupies residues 310 to 353 (SGVPSGVGEGMAGAPGVDLRLAQPGATPSEPRPASDTSVTGGER). Residues 344 to 353 (SDTSVTGGER) are compositionally biased toward polar residues.

This sequence belongs to the RapZ-like family.

Its function is as follows. Displays ATPase and GTPase activities. The polypeptide is Nucleotide-binding protein sce5766 (Sorangium cellulosum (strain So ce56) (Polyangium cellulosum (strain So ce56))).